We begin with the raw amino-acid sequence, 369 residues long: uncharacterized protein (369 aa).

The residue at position 184 (lysine 184) is an N6-(pyridoxal phosphate)lysine.

The protein belongs to the class-V pyridoxal-phosphate-dependent aminotransferase family. Pyridoxal 5'-phosphate serves as cofactor.

This is an uncharacterized protein from Helicobacter pylori (strain J99 / ATCC 700824) (Campylobacter pylori J99).